Here is a 149-residue protein sequence, read N- to C-terminus: MRIIATNKKAYTDYIIDETYEAGIVLVGTEVKSLREHGASFKDSFCRVKEGEIWLLNLHIPPYQHGNIYNHDPERPRKLLLHKKEIDRIWSKLKLEGYTVIPTKIYFNNQGKVKVEIAIAKGKKSYDKREEIKKKETQKRIKEYLKYNR.

Belongs to the SmpB family.

The protein resides in the cytoplasm. Required for rescue of stalled ribosomes mediated by trans-translation. Binds to transfer-messenger RNA (tmRNA), required for stable association of tmRNA with ribosomes. tmRNA and SmpB together mimic tRNA shape, replacing the anticodon stem-loop with SmpB. tmRNA is encoded by the ssrA gene; the 2 termini fold to resemble tRNA(Ala) and it encodes a 'tag peptide', a short internal open reading frame. During trans-translation Ala-aminoacylated tmRNA acts like a tRNA, entering the A-site of stalled ribosomes, displacing the stalled mRNA. The ribosome then switches to translate the ORF on the tmRNA; the nascent peptide is terminated with the 'tag peptide' encoded by the tmRNA and targeted for degradation. The ribosome is freed to recommence translation, which seems to be the essential function of trans-translation. The protein is SsrA-binding protein of Fervidobacterium nodosum (strain ATCC 35602 / DSM 5306 / Rt17-B1).